Here is a 165-residue protein sequence, read N- to C-terminus: NADPH-dependent 7-cyano-7-deazaguanine reductase (165 aa).

The active-site Thioimide intermediate is Cys-56. The Proton donor role is filled by Asp-63. Substrate-binding positions include 78 to 80 (VES) and 97 to 98 (HE).

The protein belongs to the GTP cyclohydrolase I family. QueF type 1 subfamily.

The protein localises to the cytoplasm. It carries out the reaction 7-aminomethyl-7-carbaguanine + 2 NADP(+) = 7-cyano-7-deazaguanine + 2 NADPH + 3 H(+). It participates in tRNA modification; tRNA-queuosine biosynthesis. Functionally, catalyzes the NADPH-dependent reduction of 7-cyano-7-deazaguanine (preQ0) to 7-aminomethyl-7-deazaguanine (preQ1). The sequence is that of NADPH-dependent 7-cyano-7-deazaguanine reductase from Bacillus mycoides (strain KBAB4) (Bacillus weihenstephanensis).